The sequence spans 545 residues: DNA mismatch repair protein MutL (545 aa).

Residues 516 to 545 (GRRSGARGGGEARPRPQEESFPEAPLPREP) are disordered.

It belongs to the DNA mismatch repair MutL/HexB family.

In terms of biological role, this protein is involved in the repair of mismatches in DNA. It is required for dam-dependent methyl-directed DNA mismatch repair. May act as a 'molecular matchmaker', a protein that promotes the formation of a stable complex between two or more DNA-binding proteins in an ATP-dependent manner without itself being part of a final effector complex. This chain is DNA mismatch repair protein MutL, found in Thermus thermophilus (strain ATCC BAA-163 / DSM 7039 / HB27).